We begin with the raw amino-acid sequence, 282 residues long: MSSYENHQALDGLTLGKSTDYRDNYDASLLQGVPRSLNRDPLGLTADNLPFHGADIWTLYELSWLNSRGLPQVAVGHVELDYTSVNLIESKSFKLYLNSFNQTRFDTWETVRQTLERDLRACAQGNVSVRLHRLDELEGQPVAHFHGTCIDDQDISIDNYQFTTDYLQHAVSGEKQVEETLVSHLLKSNCLITHQPDWGSIQIQYRGRKIDREKLLRYLVSFRHHNEFHEQCVERIFNDILRFCQPETLSVYARYTRRGGLDINPWRSNADFVPATGRLARQ.

88-90 (IES) serves as a coordination point for substrate. 90-91 (SK) provides a ligand contact to NADPH. Residue Cys-190 is the Thioimide intermediate of the active site. The active-site Proton donor is the Asp-197. Residue 229-230 (HE) participates in substrate binding. 258–259 (RG) provides a ligand contact to NADPH.

It belongs to the GTP cyclohydrolase I family. QueF type 2 subfamily. As to quaternary structure, homodimer.

It is found in the cytoplasm. The enzyme catalyses 7-aminomethyl-7-carbaguanine + 2 NADP(+) = 7-cyano-7-deazaguanine + 2 NADPH + 3 H(+). It participates in tRNA modification; tRNA-queuosine biosynthesis. Its function is as follows. Catalyzes the NADPH-dependent reduction of 7-cyano-7-deazaguanine (preQ0) to 7-aminomethyl-7-deazaguanine (preQ1). In Salmonella schwarzengrund (strain CVM19633), this protein is NADPH-dependent 7-cyano-7-deazaguanine reductase.